We begin with the raw amino-acid sequence, 727 residues long: Elongation factor 2 (727 aa).

The 242-residue stretch at 19 to 260 (DQIRNMGICA…MAIKHLPNPL (242 aa)) folds into the tr-type G domain. GTP is bound by residues 28–35 (AHIDHGKT), 94–98 (DTPGH), and 148–151 (NKVD). Position 603 is a diphthamide (histidine 603).

Belongs to the TRAFAC class translation factor GTPase superfamily. Classic translation factor GTPase family. EF-G/EF-2 subfamily.

It is found in the cytoplasm. Catalyzes the GTP-dependent ribosomal translocation step during translation elongation. During this step, the ribosome changes from the pre-translocational (PRE) to the post-translocational (POST) state as the newly formed A-site-bound peptidyl-tRNA and P-site-bound deacylated tRNA move to the P and E sites, respectively. Catalyzes the coordinated movement of the two tRNA molecules, the mRNA and conformational changes in the ribosome. This Methanococcus vannielii (strain ATCC 35089 / DSM 1224 / JCM 13029 / OCM 148 / SB) protein is Elongation factor 2 (fusA).